A 704-amino-acid polypeptide reads, in one-letter code: Elongation factor G (704 aa).

The tr-type G domain maps to 8-290; that stretch reads EKYRNIGICA…GVVRYLPAPN (283 aa). GTP is bound by residues 17-24, 88-92, and 142-145; these read AHVDAGKT, DTPGH, and NKMD.

The protein belongs to the TRAFAC class translation factor GTPase superfamily. Classic translation factor GTPase family. EF-G/EF-2 subfamily.

The protein localises to the cytoplasm. Its function is as follows. Catalyzes the GTP-dependent ribosomal translocation step during translation elongation. During this step, the ribosome changes from the pre-translocational (PRE) to the post-translocational (POST) state as the newly formed A-site-bound peptidyl-tRNA and P-site-bound deacylated tRNA move to the P and E sites, respectively. Catalyzes the coordinated movement of the two tRNA molecules, the mRNA and conformational changes in the ribosome. In Francisella tularensis subsp. tularensis (strain FSC 198), this protein is Elongation factor G.